Here is a 239-residue protein sequence, read N- to C-terminus: 1-(5-phosphoribosyl)-5-[(5-phosphoribosylamino)methylideneamino] imidazole-4-carboxamide isomerase (239 aa).

The Proton acceptor role is filled by Asp-8. Asp-129 serves as the catalytic Proton donor.

It belongs to the HisA/HisF family.

It localises to the cytoplasm. The catalysed reaction is 1-(5-phospho-beta-D-ribosyl)-5-[(5-phospho-beta-D-ribosylamino)methylideneamino]imidazole-4-carboxamide = 5-[(5-phospho-1-deoxy-D-ribulos-1-ylimino)methylamino]-1-(5-phospho-beta-D-ribosyl)imidazole-4-carboxamide. Its pathway is amino-acid biosynthesis; L-histidine biosynthesis; L-histidine from 5-phospho-alpha-D-ribose 1-diphosphate: step 4/9. In Bacillus thuringiensis subsp. konkukian (strain 97-27), this protein is 1-(5-phosphoribosyl)-5-[(5-phosphoribosylamino)methylideneamino] imidazole-4-carboxamide isomerase.